The sequence spans 1006 residues: Unconventional myosin-Id (1006 aa).

Residue Ala-2 is modified to N-acetylalanine. Residues 9–695 form the Myosin motor domain; it reads FGKADFVLMD…TLFTLEELRA (687 aa). 102–109 is an ATP binding site; the sequence is GESGAGKT. The residue at position 200 (Ser-200) is a Phosphoserine. At Tyr-536 the chain carries Phosphotyrosine. The actin-binding stretch occupies residues 572 to 594; it reads MIALVDNLASKEPYYVRCIKPND. 2 IQ domains span residues 699-719 and 721-741; these read VRVVLFLQKVWRGTLARMRYK and TKAALTIIRYYRRYKVKSYIH. The interval 776-896 is interaction with calmodulin; the sequence is LQSIFNRWRA…MDPTKQYKVM (121 aa). A TH1 domain is found at 812–1005; the sequence is GQRADLGLQR…RSGFILSVPG (194 aa).

Belongs to the TRAFAC class myosin-kinesin ATPase superfamily. Myosin family. Interacts (via the two IQ motifs) with calmodulin. Binds an additional calmodulin chain via a third, C-terminal region. Interacts with F-actin. Detected on tracheal epithelial cells, and on epithelial cells and brush border cells in duodenum, jejunum and ileum. Detected on myelinated white matter in the cerebellum, and the myelinated part of the optic nerve. Detected on mature oligodendrocites. Detected on the outside of the myelin sheet that surrounds axons (at protein level). Ubiquitous. Highest levels in adult brain, and spinal cord. Moderate levels in lung, kidney, liver and spleen. Low levels in testis and heart (at protein level).

The protein localises to the cytoplasm. Its subcellular location is the perikaryon. The protein resides in the cell projection. It localises to the dendrite. It is found in the early endosome. The protein localises to the cell cortex. Its function is as follows. Unconventional myosin that functions as actin-based motor protein with ATPase activity. Plays a role in endosomal protein trafficking, and especially in the transfer of cargo proteins from early to recycling endosomes. Required for normal planar cell polarity in ciliated tracheal cells, for normal rotational polarity of cilia, and for coordinated, unidirectional ciliary movement in the trachea. Required for normal, polarized cilia organization in brain ependymal epithelial cells. This is Unconventional myosin-Id (Myo1d) from Rattus norvegicus (Rat).